Reading from the N-terminus, the 226-residue chain is 7-cyano-7-deazaguanine synthase (226 aa).

ATP is bound at residue 11–21; it reads LSGGLDSATCL. C191, C201, C204, and C207 together coordinate Zn(2+).

This sequence belongs to the QueC family. The cofactor is Zn(2+).

The enzyme catalyses 7-carboxy-7-deazaguanine + NH4(+) + ATP = 7-cyano-7-deazaguanine + ADP + phosphate + H2O + H(+). The protein operates within purine metabolism; 7-cyano-7-deazaguanine biosynthesis. Functionally, catalyzes the ATP-dependent conversion of 7-carboxy-7-deazaguanine (CDG) to 7-cyano-7-deazaguanine (preQ(0)). The chain is 7-cyano-7-deazaguanine synthase from Aromatoleum aromaticum (strain DSM 19018 / LMG 30748 / EbN1) (Azoarcus sp. (strain EbN1)).